The chain runs to 174 residues: Disulfide bond formation protein B (174 aa).

Over 1–14 (MLHIFYIYSKSRKF) the chain is Cytoplasmic. A helical membrane pass occupies residues 15-31 (WAILICSSISLISIALL). At 32-49 (NQFFFLLKPCILCIYQRC) the chain is on the periplasmic side. Residues Cys-41 and Cys-44 are joined by a disulfide bond. The helical transmembrane segment at 50-65 (SLFGITIAGLIALISP) threads the bilayer. At 66–72 (KTTLLRL) the chain is on the cytoplasmic side. A helical membrane pass occupies residues 73–90 (FSIFIWLYSAIKGLYFSN). The Periplasmic segment spans residues 91-146 (IHMQTTLHPSSSLTCDLFVSFPNWLPLNKWYPIIFDSKISNCYSYPQYLLYLEISQ). An intrachain disulfide couples Cys-105 to Cys-132. Residues 147–165 (WMLLFFLIYLIIAIFTIIS) traverse the membrane as a helical segment. Over 166-174 (QCHNLFQKK) the chain is Cytoplasmic.

The protein belongs to the DsbB family.

Its subcellular location is the cell inner membrane. Functionally, required for disulfide bond formation in some periplasmic proteins. Acts by oxidizing the DsbA protein. The protein is Disulfide bond formation protein B of Blochmanniella floridana.